A 689-amino-acid polypeptide reads, in one-letter code: tRNA wybutosine-synthesizing protein 4 (689 aa).

The segment at 1-33 is disordered; sequence MTSTSKLDANQLARQRKKLEKDRRKKVYDDQQV. Residues 14-26 are compositionally biased toward basic residues; the sequence is RQRKKLEKDRRKK. Residues arginine 84, glycine 111, aspartate 137, 183 to 184, and glutamate 215 each bind S-adenosyl-L-methionine; that span reads DL.

The protein belongs to the methyltransferase superfamily. LCMT family.

It catalyses the reaction 7-[(3S)-3-amino-3-carboxypropyl]wyosine(37) in tRNA(Phe) + S-adenosyl-L-methionine = 7-[(3S)-(3-amino-3-methoxycarbonyl)propyl]wyosine(37) in tRNA(Phe) + S-adenosyl-L-homocysteine. It carries out the reaction 7-[(3S)-(3-amino-3-methoxycarbonyl)propyl]wyosine(37) in tRNA(Phe) + S-adenosyl-L-methionine + CO2 = wybutosine(37) in tRNA(Phe) + S-adenosyl-L-homocysteine + 2 H(+). Its pathway is tRNA modification; wybutosine-tRNA(Phe) biosynthesis. Probable S-adenosyl-L-methionine-dependent methyltransferase that acts as a component of the wybutosine biosynthesis pathway. Wybutosine is a hyper modified guanosine with a tricyclic base found at the 3'-position adjacent to the anticodon of eukaryotic phenylalanine tRNA. May methylate the carboxyl group of leucine residues to form alpha-leucine ester residues. In Candida albicans (strain SC5314 / ATCC MYA-2876) (Yeast), this protein is tRNA wybutosine-synthesizing protein 4 (PPM2).